A 190-amino-acid polypeptide reads, in one-letter code: Hypoxanthine/guanine phosphoribosyltransferase (190 aa).

The protein belongs to the purine/pyrimidine phosphoribosyltransferase family. Archaeal HPRT subfamily. Homodimer.

Its subcellular location is the cytoplasm. It carries out the reaction IMP + diphosphate = hypoxanthine + 5-phospho-alpha-D-ribose 1-diphosphate. The enzyme catalyses GMP + diphosphate = guanine + 5-phospho-alpha-D-ribose 1-diphosphate. Its pathway is purine metabolism; IMP biosynthesis via salvage pathway; IMP from hypoxanthine: step 1/1. Functionally, catalyzes a salvage reaction resulting in the formation of IMP that is energically less costly than de novo synthesis. The protein is Hypoxanthine/guanine phosphoribosyltransferase of Methanosalsum zhilinae (strain DSM 4017 / NBRC 107636 / OCM 62 / WeN5) (Methanohalophilus zhilinae).